Reading from the N-terminus, the 112-residue chain is Large ribosomal subunit protein uL22 (112 aa).

It belongs to the universal ribosomal protein uL22 family. In terms of assembly, part of the 50S ribosomal subunit.

This protein binds specifically to 23S rRNA; its binding is stimulated by other ribosomal proteins, e.g. L4, L17, and L20. It is important during the early stages of 50S assembly. It makes multiple contacts with different domains of the 23S rRNA in the assembled 50S subunit and ribosome. Its function is as follows. The globular domain of the protein is located near the polypeptide exit tunnel on the outside of the subunit, while an extended beta-hairpin is found that lines the wall of the exit tunnel in the center of the 70S ribosome. This Sulfurovum sp. (strain NBC37-1) protein is Large ribosomal subunit protein uL22.